A 1414-amino-acid chain; its full sequence is DNA-directed RNA polymerase subunit beta' (1414 aa).

4 residues coordinate Zn(2+): Cys70, Cys72, Cys85, and Cys88. The Mg(2+) site is built by Asp460, Asp462, and Asp464. The Zn(2+) site is built by Cys814, Cys888, Cys895, and Cys898. Over residues 1392–1403 (EQALSEALKSSA) the composition is skewed to low complexity. A disordered region spans residues 1392 to 1414 (EQALSEALKSSAPQEAKAAQKDE).

Belongs to the RNA polymerase beta' chain family. In terms of assembly, the RNAP catalytic core consists of 2 alpha, 1 beta, 1 beta' and 1 omega subunit. When a sigma factor is associated with the core the holoenzyme is formed, which can initiate transcription. Requires Mg(2+) as cofactor. Zn(2+) serves as cofactor.

The catalysed reaction is RNA(n) + a ribonucleoside 5'-triphosphate = RNA(n+1) + diphosphate. Functionally, DNA-dependent RNA polymerase catalyzes the transcription of DNA into RNA using the four ribonucleoside triphosphates as substrates. The sequence is that of DNA-directed RNA polymerase subunit beta' from Coxiella burnetii (strain Dugway 5J108-111).